A 427-amino-acid polypeptide reads, in one-letter code: Adenylosuccinate synthetase (427 aa).

Residues 12–18 and 40–42 contribute to the GTP site; these read GDEGKGK and GHT. D13 acts as the Proton acceptor in catalysis. Residues D13 and G40 each coordinate Mg(2+). IMP is bound by residues 13–16, 38–41, T128, R142, Q223, T238, and R302; these read DEGK and NAGH. Residue H41 is the Proton donor of the active site. A substrate-binding site is contributed by 298–304; sequence TTTGRPR. Residues R304, 330 to 332, and 412 to 414 each bind GTP; these read LLD and SVG.

This sequence belongs to the adenylosuccinate synthetase family. In terms of assembly, homodimer. Mg(2+) serves as cofactor.

The protein resides in the cytoplasm. The catalysed reaction is IMP + L-aspartate + GTP = N(6)-(1,2-dicarboxyethyl)-AMP + GDP + phosphate + 2 H(+). It participates in purine metabolism; AMP biosynthesis via de novo pathway; AMP from IMP: step 1/2. Plays an important role in the de novo pathway of purine nucleotide biosynthesis. Catalyzes the first committed step in the biosynthesis of AMP from IMP. In Alkaliphilus metalliredigens (strain QYMF), this protein is Adenylosuccinate synthetase.